The sequence spans 132 residues: Small ribosomal subunit protein uS8 (132 aa).

It belongs to the universal ribosomal protein uS8 family. As to quaternary structure, part of the 30S ribosomal subunit. Contacts proteins S5 and S12.

Its function is as follows. One of the primary rRNA binding proteins, it binds directly to 16S rRNA central domain where it helps coordinate assembly of the platform of the 30S subunit. The sequence is that of Small ribosomal subunit protein uS8 from Corynebacterium kroppenstedtii (strain DSM 44385 / JCM 11950 / CIP 105744 / CCUG 35717).